Consider the following 476-residue polypeptide: Protein THYLAKOID RHODANESE-LIKE, chloroplastic (476 aa).

The N-terminal 21 residues, M1–R21, are a transit peptide targeting the chloroplast. The disordered stretch occupies residues M1 to A29. Positions A11 to R21 are enriched in low complexity. The N-terminal 37 residues, A22–P58, are a transit peptide targeting the thylakoid. A helical transmembrane segment spans residues L100–G120. Residues E140–A246 form the Rhodanese domain. A run of 2 helical transmembrane segments spans residues L264–I284 and V287–A307. Residues L342–P476 are disordered. Positions P351–A389 are enriched in low complexity. Pro residues predominate over residues L403–L412. Positions E425 to E446 are enriched in low complexity. A compositionally biased stretch (pro residues) spans A447–P476.

Component of high molecular weight thylakoid LFNRs-containing protein complexes containing LIR1, LFNR1, LFNR2, TIC62 and TROL proteins.

The protein resides in the plastid. It localises to the chloroplast thylakoid membrane. In terms of biological role, rhodanese domain-containing protein required for anchoring ferredoxin--NADP reductase to the thylakoid membranes and sustaining efficient linear electron flow (LEF). The protein is Protein THYLAKOID RHODANESE-LIKE, chloroplastic of Oryza sativa subsp. indica (Rice).